The sequence spans 235 residues: Putative uridine kinase C227.14 (235 aa).

Position 36 to 43 (G36 to S43) interacts with ATP.

This sequence belongs to the uridine kinase family.

The protein localises to the cytoplasm. It is found in the nucleus. It carries out the reaction uridine + ATP = UMP + ADP + H(+). The catalysed reaction is cytidine + ATP = CMP + ADP + H(+). The protein operates within pyrimidine metabolism; CTP biosynthesis via salvage pathway; CTP from cytidine: step 1/3. It functions in the pathway pyrimidine metabolism; UMP biosynthesis via salvage pathway; UMP from uridine: step 1/1. The sequence is that of Putative uridine kinase C227.14 from Schizosaccharomyces pombe (strain 972 / ATCC 24843) (Fission yeast).